The following is a 151-amino-acid chain: S-ribosylhomocysteine lyase (151 aa).

Fe cation-binding residues include H54, H58, and C121.

The protein belongs to the LuxS family. Homodimer. The cofactor is Fe cation.

The enzyme catalyses S-(5-deoxy-D-ribos-5-yl)-L-homocysteine = (S)-4,5-dihydroxypentane-2,3-dione + L-homocysteine. Involved in the synthesis of autoinducer 2 (AI-2) which is secreted by bacteria and is used to communicate both the cell density and the metabolic potential of the environment. The regulation of gene expression in response to changes in cell density is called quorum sensing. Catalyzes the transformation of S-ribosylhomocysteine (RHC) to homocysteine (HC) and 4,5-dihydroxy-2,3-pentadione (DPD). The polypeptide is S-ribosylhomocysteine lyase (Clostridium perfringens (strain ATCC 13124 / DSM 756 / JCM 1290 / NCIMB 6125 / NCTC 8237 / Type A)).